Reading from the N-terminus, the 135-residue chain is Large ribosomal subunit protein uL16 (135 aa).

This sequence belongs to the universal ribosomal protein uL16 family. As to quaternary structure, part of the 50S ribosomal subunit.

Its function is as follows. Binds 23S rRNA and is also seen to make contacts with the A and possibly P site tRNAs. The chain is Large ribosomal subunit protein uL16 from Coprothermobacter proteolyticus (strain ATCC 35245 / DSM 5265 / OCM 4 / BT).